A 231-amino-acid polypeptide reads, in one-letter code: Small ribosomal subunit protein uS3 (231 aa).

Positions 39–107 (IRKFIKEKLF…QVSVNIVEIK (69 aa)) constitute a KH type-2 domain.

It belongs to the universal ribosomal protein uS3 family. As to quaternary structure, part of the 30S ribosomal subunit. Forms a tight complex with proteins S10 and S14.

Binds the lower part of the 30S subunit head. Binds mRNA in the 70S ribosome, positioning it for translation. The chain is Small ribosomal subunit protein uS3 from Pelotomaculum thermopropionicum (strain DSM 13744 / JCM 10971 / SI).